The sequence spans 209 residues: MALRDIKPTRSELINLKRKIQLSQRGYKILKMKRDGLIMEFFKILSEAKDSRGELLRRYKHAVEMMAVANTVEGALGVKAAAFSVKETPEITLKSKNIMGVVVPEIESSKVKKTLADRGYGVLGTSPVIDETASSFEDLVEAIIESAEIETTMKRLLDEIEKTKRRVNALEFKVIPELTEARDFIKMRLDEMEREELFRMKKIKARGSS.

Belongs to the V-ATPase D subunit family. Has multiple subunits with at least A(3), B(3), C, D, E, F, H, I and proteolipid K(x).

Its subcellular location is the cell membrane. Its function is as follows. Component of the A-type ATP synthase that produces ATP from ADP in the presence of a proton gradient across the membrane. The polypeptide is A-type ATP synthase subunit D (Methanoregula boonei (strain DSM 21154 / JCM 14090 / 6A8)).